The chain runs to 469 residues: Neuraminidase (469 aa).

Over 1-6 (MNTNQR) the chain is Intravirion. Residues 7-27 (IITIGTICLIVGIISLLLQIG) traverse the membrane as a helical segment. Positions 11–33 (GTICLIVGIISLLLQIGNIISLW) are involved in apical transport and lipid raft association. The Virion surface portion of the chain corresponds to 28-469 (NIISLWISHS…GADLPFTIDK (442 aa)). The segment at 36–90 (HSIQTREKNHPEVCNQSVITYENNTWVNQTYVNISNANIVAGQGVTSIILAGNSP) is hypervariable stalk region. N-linked (GlcNAc...) asparagine; by host glycosylation is found at Asn-50, Asn-58, Asn-63, and Asn-68. The segment at 91–469 (LCPISGWAIY…GADLPFTIDK (379 aa)) is head of neuraminidase. Intrachain disulfides connect Cys-92–Cys-417, Cys-124–Cys-129, Cys-184–Cys-231, Cys-233–Cys-238, Cys-279–Cys-292, Cys-281–Cys-290, Cys-318–Cys-335, and Cys-421–Cys-446. A substrate-binding site is contributed by Arg-118. An N-linked (GlcNAc...) asparagine; by host glycan is attached at Asn-146. Residue Asp-151 is the Proton donor/acceptor of the active site. Arg-152 contributes to the substrate binding site. N-linked (GlcNAc...) asparagine; by host glycosylation occurs at Asn-235. 277 to 278 (EE) contacts substrate. A substrate-binding site is contributed by Arg-293. Ca(2+) is bound by residues Asp-294, Asp-324, and Asn-344. Residue Arg-368 coordinates substrate. The Nucleophile role is filled by Tyr-402. Residue Asn-454 is glycosylated (N-linked (GlcNAc...) asparagine; by host).

It belongs to the glycosyl hydrolase 34 family. In terms of assembly, homotetramer. Ca(2+) is required as a cofactor. In terms of processing, N-glycosylated.

The protein resides in the virion membrane. It localises to the host apical cell membrane. It carries out the reaction Hydrolysis of alpha-(2-&gt;3)-, alpha-(2-&gt;6)-, alpha-(2-&gt;8)- glycosidic linkages of terminal sialic acid residues in oligosaccharides, glycoproteins, glycolipids, colominic acid and synthetic substrates.. Its activity is regulated as follows. Inhibited by the neuraminidase inhibitors zanamivir (Relenza) and oseltamivir (Tamiflu). These drugs interfere with the release of progeny virus from infected cells and are effective against all influenza strains. Resistance to neuraminidase inhibitors is quite rare. Functionally, catalyzes the removal of terminal sialic acid residues from viral and cellular glycoconjugates. Cleaves off the terminal sialic acids on the glycosylated HA during virus budding to facilitate virus release. Additionally helps virus spread through the circulation by further removing sialic acids from the cell surface. These cleavages prevent self-aggregation and ensure the efficient spread of the progeny virus from cell to cell. Otherwise, infection would be limited to one round of replication. Described as a receptor-destroying enzyme because it cleaves a terminal sialic acid from the cellular receptors. May facilitate viral invasion of the upper airways by cleaving the sialic acid moieties on the mucin of the airway epithelial cells. Likely to plays a role in the budding process through its association with lipid rafts during intracellular transport. May additionally display a raft-association independent effect on budding. Plays a role in the determination of host range restriction on replication and virulence. Sialidase activity in late endosome/lysosome traffic seems to enhance virus replication. The sequence is that of Neuraminidase from Influenza A virus (strain A/Swine/Wisconsin/1/1967 H1N1).